The following is a 389-amino-acid chain: Nicotinamide-nucleotide adenylyltransferase (389 aa).

The short motif at 380-383 is the Nuclear localization signal element; that stretch reads KKQK.

This sequence belongs to the eukaryotic NMN adenylyltransferase family. In terms of tissue distribution, abundantly expressed in neuronal and muscle cells. Present at relatively low levels at the neuromuscular junction. Expressed in the eye; present in photoreceptor cells and various neurons in the lamina cortex and medulla cortex and at low levels in the lamina.

The protein localises to the nucleus. It localises to the cytoplasm. The protein resides in the presynaptic active zone. The catalysed reaction is beta-nicotinamide D-ribonucleotide + ATP + H(+) = diphosphate + NAD(+). The enzyme catalyses nicotinate beta-D-ribonucleotide + ATP + H(+) = deamido-NAD(+) + diphosphate. Its pathway is cofactor biosynthesis; NAD(+) biosynthesis; NAD(+) from nicotinamide D-ribonucleotide: step 1/1. The protein operates within cofactor biosynthesis; NAD(+) biosynthesis; deamido-NAD(+) from nicotinate D-ribonucleotide: step 1/1. Its function is as follows. Catalyzes the formation of NAD(+) from nicotinamide mononucleotide (NMN) and ATP. Essential for viability. Stress-response chaperone protein that prevents toxic aggregation of proteins and promotes proteasome-mediated degradation of misfolded proteins; this is independent of its NAD(+) synthesis activity. Neuroprotective in response to toxic protein aggregation, for example by overexpressed Atx-1/ataxin-1. Required for maintenance and integrity of mature neurons, protecting them from neuronal activity-induced neurodegeneration. Required for the maintenance of axonal and dendritic integrity in both central and peripheral neurons. Chaperone function and neuroprotective roles are largely independent of NAD(+) synthesis activity. Catalyzes the formation of NAD(+) from nicotinamide mononucleotide (NMN) and ATP. Has, or stimulates, chaperone holdase activity but not refoldase activity. Does not have neuroprotective properties and may stimulate apoptosis and neurodegeneration in response to toxic protein aggregates. Functionally, catalyzes the formation of NAD(+) from nicotinamide mononucleotide (NMN) and ATP. Has, or stimulates, chaperone holdase and refoldase activity. Neuroprotective and reduces the toxic load of protein aggregates, preventing apoptosis and neurodegeneration. Promotes clearance of nuclear misfolded protein aggregates. The sequence is that of Nicotinamide-nucleotide adenylyltransferase from Drosophila melanogaster (Fruit fly).